Consider the following 71-residue polypeptide: Protein DP71L (71 aa).

Important for host CHOP inhibition regions lie at residues 16 to 18 and 57 to 61; these read VRF and LSTVL.

It belongs to the asfivirus DP71L family. In terms of assembly, interacts (via C-terminus) with host PPP1CB.

Functionally, interacts with the host phosphatase PP1 catalytic subunit (PPP1CB) and recruits it to dephosphorylate EIF2S1/eIF2alpha and therefore restores the host translation that has been shut-down by the host. Also inhibits the EIF2S1/eIF2alpha-ATF4-DDIT3/CHOP pathway. This African swine fever virus (strain Badajoz 1971 Vero-adapted) (Ba71V) protein is Protein DP71L.